The sequence spans 203 residues: Glycerol-3-phosphate acyltransferase 1 (203 aa).

The next 6 membrane-spanning stretches (helical) occupy residues 2-22, 52-72, 82-102, 117-137, 150-168, and 170-190; these read LNFF…SHII, GFPA…FFVW, VIAF…FLKF, VLTK…FSIL, EDAF…YTMW, and VFNG…IVFY.

The protein belongs to the PlsY family. As to quaternary structure, probably interacts with PlsX.

The protein resides in the cell inner membrane. The enzyme catalyses an acyl phosphate + sn-glycerol 3-phosphate = a 1-acyl-sn-glycero-3-phosphate + phosphate. It functions in the pathway lipid metabolism; phospholipid metabolism. Catalyzes the transfer of an acyl group from acyl-phosphate (acyl-PO(4)) to glycerol-3-phosphate (G3P) to form lysophosphatidic acid (LPA). This enzyme utilizes acyl-phosphate as fatty acyl donor, but not acyl-CoA or acyl-ACP. The polypeptide is Glycerol-3-phosphate acyltransferase 1 (Thermotoga maritima (strain ATCC 43589 / DSM 3109 / JCM 10099 / NBRC 100826 / MSB8)).